An 81-amino-acid chain; its full sequence is Short neurotoxin 1 (81 aa).

A signal peptide spans 1–21 (MKTLLLSPVVVTIVCLDLGYT). Cystine bridges form between Cys24–Cys43, Cys38–Cys60, Cys62–Cys73, and Cys74–Cys79.

The protein belongs to the three-finger toxin family. Short-chain subfamily. Type I alpha-neurotoxin sub-subfamily. Expressed by the venom gland.

It is found in the secreted. Its function is as follows. Binds to muscle nicotinic acetylcholine receptor (nAChR) and inhibit acetylcholine from binding to the receptor, thereby impairing neuromuscular transmission. In Hydrophis peronii (Spiny-headed seasnake), this protein is Short neurotoxin 1.